The chain runs to 94 residues: Pyrimidine/purine nucleoside phosphorylase (94 aa).

The protein belongs to the nucleoside phosphorylase PpnP family.

It catalyses the reaction a purine D-ribonucleoside + phosphate = a purine nucleobase + alpha-D-ribose 1-phosphate. The enzyme catalyses adenosine + phosphate = alpha-D-ribose 1-phosphate + adenine. It carries out the reaction cytidine + phosphate = cytosine + alpha-D-ribose 1-phosphate. The catalysed reaction is guanosine + phosphate = alpha-D-ribose 1-phosphate + guanine. It catalyses the reaction inosine + phosphate = alpha-D-ribose 1-phosphate + hypoxanthine. The enzyme catalyses thymidine + phosphate = 2-deoxy-alpha-D-ribose 1-phosphate + thymine. It carries out the reaction uridine + phosphate = alpha-D-ribose 1-phosphate + uracil. The catalysed reaction is xanthosine + phosphate = alpha-D-ribose 1-phosphate + xanthine. Its function is as follows. Catalyzes the phosphorolysis of diverse nucleosides, yielding D-ribose 1-phosphate and the respective free bases. Can use uridine, adenosine, guanosine, cytidine, thymidine, inosine and xanthosine as substrates. Also catalyzes the reverse reactions. The protein is Pyrimidine/purine nucleoside phosphorylase of Pectobacterium atrosepticum (strain SCRI 1043 / ATCC BAA-672) (Erwinia carotovora subsp. atroseptica).